Reading from the N-terminus, the 299-residue chain is Transcription factor srbB (299 aa).

2 disordered regions span residues 1–33 (MAYNNRPDASTAFTFDNDDRFVNQQPKGPDPLS) and 81–204 (ISGF…NAAK). The segment covering 161–170 (PVTSQATTSP) has biased composition (low complexity). Over residues 188–199 (RSLSTDSQTATG) the composition is skewed to polar residues. The interval 203 to 216 (AKRAAHNIIEKRYR) is basic motif. The 62-residue stretch at 203–264 (AKRAAHNIIE…TNAIAYMQEL (62 aa)) folds into the bHLH domain. A helix-loop-helix motif region spans residues 217–264 (TNMNAKFVALEKAMSGSGVQKPTKGGSGPASLKKSEILTNAIAYMQEL). The stretch at 254 to 281 (LTNAIAYMQELQDQNAALQKELALLKQN) forms a coiled coil.

The protein localises to the nucleus. Its function is as follows. Key transcription factors critical for hypoxia adaptation and virulence. Plays a major role in regulation of heme biosynthesis and carbohydrate metabolism early in the response to hypoxia. In Aspergillus fumigatus (strain ATCC MYA-4609 / CBS 101355 / FGSC A1100 / Af293) (Neosartorya fumigata), this protein is Transcription factor srbB.